The sequence spans 193 residues: Ion-translocating oxidoreductase complex subunit A (193 aa).

Helical transmembrane passes span 5–25 (LLLFVGTVLVNNFVLVKFLGL), 39–59 (IGMGLATTFVLTLASVCAWMV), 62–82 (FILLPLGLIYLRTLAFILVIA), 102–122 (LLGIFLPLITTNCAVLGVALL), 134–154 (AVYGFSAAAGFSLVMVLFAAI), and 171–191 (SIALITAGLMSLAFMGFTGLV).

It belongs to the NqrDE/RnfAE family. As to quaternary structure, the complex is composed of six subunits: RnfA, RnfB, RnfC, RnfD, RnfE and RnfG.

The protein resides in the cell inner membrane. Its function is as follows. Part of a membrane-bound complex that couples electron transfer with translocation of ions across the membrane. The protein is Ion-translocating oxidoreductase complex subunit A of Yersinia pestis (strain Pestoides F).